A 739-amino-acid polypeptide reads, in one-letter code: Phosphoribosylformylglycinamidine synthase subunit PurL (739 aa).

The active site involves histidine 54. 2 residues coordinate ATP: tyrosine 57 and lysine 96. Residue glutamate 98 coordinates Mg(2+). Substrate-binding positions include 99–102 (SHNH) and arginine 121. Histidine 100 serves as the catalytic Proton acceptor. Aspartate 122 is a Mg(2+) binding site. Glutamine 245 lines the substrate pocket. Aspartate 273 provides a ligand contact to Mg(2+). Position 317–319 (317–319 (ESQ)) interacts with substrate. Positions 500 and 537 each coordinate ATP. Asparagine 538 provides a ligand contact to Mg(2+). Position 540 (serine 540) interacts with substrate.

It belongs to the FGAMS family. In terms of assembly, monomer. Part of the FGAM synthase complex composed of 1 PurL, 1 PurQ and 2 PurS subunits.

It is found in the cytoplasm. It carries out the reaction N(2)-formyl-N(1)-(5-phospho-beta-D-ribosyl)glycinamide + L-glutamine + ATP + H2O = 2-formamido-N(1)-(5-O-phospho-beta-D-ribosyl)acetamidine + L-glutamate + ADP + phosphate + H(+). It participates in purine metabolism; IMP biosynthesis via de novo pathway; 5-amino-1-(5-phospho-D-ribosyl)imidazole from N(2)-formyl-N(1)-(5-phospho-D-ribosyl)glycinamide: step 1/2. Part of the phosphoribosylformylglycinamidine synthase complex involved in the purines biosynthetic pathway. Catalyzes the ATP-dependent conversion of formylglycinamide ribonucleotide (FGAR) and glutamine to yield formylglycinamidine ribonucleotide (FGAM) and glutamate. The FGAM synthase complex is composed of three subunits. PurQ produces an ammonia molecule by converting glutamine to glutamate. PurL transfers the ammonia molecule to FGAR to form FGAM in an ATP-dependent manner. PurS interacts with PurQ and PurL and is thought to assist in the transfer of the ammonia molecule from PurQ to PurL. The polypeptide is Phosphoribosylformylglycinamidine synthase subunit PurL (Exiguobacterium sp. (strain ATCC BAA-1283 / AT1b)).